The following is a 271-amino-acid chain: Type III pantothenate kinase (271 aa).

6–13 (DVRNTNIV) lines the ATP pocket. 109–112 (GADR) lines the substrate pocket. Residue Asp-111 is the Proton acceptor of the active site. Asp-131 is a K(+) binding site. Thr-134 serves as a coordination point for ATP. Position 186 (Thr-186) interacts with substrate.

The protein belongs to the type III pantothenate kinase family. As to quaternary structure, homodimer. NH4(+) serves as cofactor. The cofactor is K(+).

It is found in the cytoplasm. It carries out the reaction (R)-pantothenate + ATP = (R)-4'-phosphopantothenate + ADP + H(+). It functions in the pathway cofactor biosynthesis; coenzyme A biosynthesis; CoA from (R)-pantothenate: step 1/5. Functionally, catalyzes the phosphorylation of pantothenate (Pan), the first step in CoA biosynthesis. This is Type III pantothenate kinase from Rhodococcus jostii (strain RHA1).